The chain runs to 294 residues: Glyceraldehyde-3-phosphate dehydrogenase (294 aa).

Positions 19, 63, and 105 each coordinate NAD(+). D-glyceraldehyde 3-phosphate-binding positions include 134 to 136 (SCT), threonine 165, 194 to 195 (TG), and arginine 217. Cysteine 135 (nucleophile) is an active-site residue.

It belongs to the glyceraldehyde-3-phosphate dehydrogenase family. As to quaternary structure, homotetramer.

Its subcellular location is the cytoplasm. The catalysed reaction is D-glyceraldehyde 3-phosphate + phosphate + NAD(+) = (2R)-3-phospho-glyceroyl phosphate + NADH + H(+). It functions in the pathway carbohydrate degradation; glycolysis; pyruvate from D-glyceraldehyde 3-phosphate: step 1/5. Its function is as follows. Catalyzes the oxidative phosphorylation of glyceraldehyde 3-phosphate (G3P) to 1,3-bisphosphoglycerate (BPG) using the cofactor NAD. The first reaction step involves the formation of a hemiacetal intermediate between G3P and a cysteine residue, and this hemiacetal intermediate is then oxidized to a thioester, with concomitant reduction of NAD to NADH. The reduced NADH is then exchanged with the second NAD, and the thioester is attacked by a nucleophilic inorganic phosphate to produce BPG. The sequence is that of Glyceraldehyde-3-phosphate dehydrogenase (gap) from Klebsiella aerogenes (Enterobacter aerogenes).